The chain runs to 639 residues: Probable methyltransferase PMT18 (639 aa).

Residues 1 to 19 (MAKENSSHSLAEAKRKRLT) lie on the Cytoplasmic side of the membrane. Residues 20-42 (WILCVSGLCILSYVLGSWQTNTV) traverse the membrane as a helical; Signal-anchor for type II membrane protein segment. The interval 41–86 (TVPTSSSEAYSRMGCDETSTTTRAQTTQTQTNPSSDDTSSSLSSSE) is disordered. The Lumenal segment spans residues 43-639 (PTSSSEAYSR…VKSYWTGPSS (597 aa)). Low complexity predominate over residues 58–85 (TSTTTRAQTTQTQTNPSSDDTSSSLSSS). Residues N104 and N427 are each glycosylated (N-linked (GlcNAc...) asparagine).

The protein belongs to the methyltransferase superfamily.

It is found in the endoplasmic reticulum membrane. The chain is Probable methyltransferase PMT18 from Arabidopsis thaliana (Mouse-ear cress).